Consider the following 218-residue polypeptide: Oxygen regulatory protein NreC (218 aa).

The Response regulatory domain maps to 2–119 (KIVIADDHAV…QLILAVRTVY (118 aa)). The residue at position 53 (Asp53) is a 4-aspartylphosphate. Positions 149-214 (SSDPFKILSK…ELVEYALKKK (66 aa)) constitute an HTH luxR-type domain. Residues 173 to 192 (NKDIAEKLFVSVKTVEAHKT) constitute a DNA-binding region (H-T-H motif).

Post-translationally, phosphorylated by NreB.

The protein localises to the cytoplasm. Functionally, member of the two-component regulatory system NreB/NreC involved in the control of dissimilatory nitrate/nitrite reduction in response to oxygen. Phosphorylated NreC binds to a GC-rich palindromic sequence at the promoters of the nitrate (narGHJI) and nitrite (nir) reductase operons, as well as the putative nitrate transporter gene narT, and activates their expression. The protein is Oxygen regulatory protein NreC (nreC) of Staphylococcus epidermidis (strain ATCC 12228 / FDA PCI 1200).